Reading from the N-terminus, the 309-residue chain is MRRVILSNPRGFCAGVVRAIQVVESALEKWGAPIYVKHEIVHNRHVVDDLKRRGAIFIEDLKDVPCGEKVIYSAHGIPPEVREEAKARNLFDIDATCVLVTKIHSAVKLYASKGYQIILIGKKKHVEVIGIRGEAPESVTVVEKVEDVANLPFDIHVPLFFVTQTTLSLDDVAEVTQALKARYPHIITLPSSSVCYATQNRQEALRAVLPRVNFVYVIGDVQSSNSNRLREVAEKRNIPARLVNSPDHISDEILHYSGDIAVTAGASTPEHIIQSCISRLKELIPDLQVEEDIFTTEDVVFQPPKELRT.

Cys13 contacts [4Fe-4S] cluster. (2E)-4-hydroxy-3-methylbut-2-enyl diphosphate-binding residues include His42 and His75. Positions 42 and 75 each coordinate dimethylallyl diphosphate. Residues His42 and His75 each coordinate isopentenyl diphosphate. Cys97 is a [4Fe-4S] cluster binding site. His125 serves as a coordination point for (2E)-4-hydroxy-3-methylbut-2-enyl diphosphate. His125 is a dimethylallyl diphosphate binding site. His125 serves as a coordination point for isopentenyl diphosphate. The active-site Proton donor is Glu127. Residue Thr165 coordinates (2E)-4-hydroxy-3-methylbut-2-enyl diphosphate. Cys195 provides a ligand contact to [4Fe-4S] cluster. Ser223, Ser224, Asn225, and Ser267 together coordinate (2E)-4-hydroxy-3-methylbut-2-enyl diphosphate. Positions 223, 224, 225, and 267 each coordinate dimethylallyl diphosphate. Residues Ser223, Ser224, Asn225, and Ser267 each contribute to the isopentenyl diphosphate site.

The protein belongs to the IspH family. The cofactor is [4Fe-4S] cluster.

It catalyses the reaction isopentenyl diphosphate + 2 oxidized [2Fe-2S]-[ferredoxin] + H2O = (2E)-4-hydroxy-3-methylbut-2-enyl diphosphate + 2 reduced [2Fe-2S]-[ferredoxin] + 2 H(+). It carries out the reaction dimethylallyl diphosphate + 2 oxidized [2Fe-2S]-[ferredoxin] + H2O = (2E)-4-hydroxy-3-methylbut-2-enyl diphosphate + 2 reduced [2Fe-2S]-[ferredoxin] + 2 H(+). It functions in the pathway isoprenoid biosynthesis; dimethylallyl diphosphate biosynthesis; dimethylallyl diphosphate from (2E)-4-hydroxy-3-methylbutenyl diphosphate: step 1/1. Its pathway is isoprenoid biosynthesis; isopentenyl diphosphate biosynthesis via DXP pathway; isopentenyl diphosphate from 1-deoxy-D-xylulose 5-phosphate: step 6/6. Functionally, catalyzes the conversion of 1-hydroxy-2-methyl-2-(E)-butenyl 4-diphosphate (HMBPP) into a mixture of isopentenyl diphosphate (IPP) and dimethylallyl diphosphate (DMAPP). Acts in the terminal step of the DOXP/MEP pathway for isoprenoid precursor biosynthesis. The chain is 4-hydroxy-3-methylbut-2-enyl diphosphate reductase from Chlamydia abortus (strain DSM 27085 / S26/3) (Chlamydophila abortus).